A 138-amino-acid chain; its full sequence is Putative pre-16S rRNA nuclease (138 aa).

Belongs to the YqgF nuclease family.

It localises to the cytoplasm. In terms of biological role, could be a nuclease involved in processing of the 5'-end of pre-16S rRNA. This is Putative pre-16S rRNA nuclease (yrrK) from Bacillus subtilis (strain 168).